The sequence spans 222 residues: Countin-3 (222 aa).

Positions 1–20 (MNKILSLFLITILLISKVMS) are cleaved as a signal peptide. One can recognise a Saposin B-type domain in the interval 21–105 (SSEECKLCTD…ESVKMCQYND (85 aa)). Intrachain disulfides connect cysteine 25/cysteine 101, cysteine 28/cysteine 95, and cysteine 56/cysteine 68. 3 N-linked (GlcNAc...) asparagine glycosylation sites follow: asparagine 108, asparagine 134, and asparagine 218.

It belongs to the countin family.

It is found in the secreted. Functionally, may control the size of the multicellular structure. The chain is Countin-3 (ctnC) from Dictyostelium discoideum (Social amoeba).